We begin with the raw amino-acid sequence, 360 residues long: Phospho-N-acetylmuramoyl-pentapeptide-transferase (360 aa).

Topologically, residues 1-25 are periplasmic; that stretch reads MLVWLAEHLVKYYSGFNVFSYLTFR. Residues 26-46 form a helical membrane-spanning segment; that stretch reads AIVSLLTALFISLWMGPRMIA. Residues 47 to 71 are Cytoplasmic-facing; sequence HLQKLSFGQVVRNDGPESHFSKRGT. Residues 72–92 form a helical membrane-spanning segment; it reads PTMGGIMILTAIVISVLLWAY. Position 93 (Pro-93) is a topological domain, periplasmic. A helical membrane pass occupies residues 94–114; that stretch reads SNPYVWCVLVVLVGYGIIGFV. The Cytoplasmic segment spans residues 115 to 131; sequence DDYRKVVRKDTKGLIAR. A helical membrane pass occupies residues 132 to 152; the sequence is WKYFWMSVIALGVAFALYLAG. The Periplasmic segment spans residues 153-167; the sequence is KDTPATQLVVPFFKD. Residues 168 to 188 traverse the membrane as a helical segment; sequence VMPQLGLFYILLAYFVIVGTG. Over 189 to 198 the chain is Cytoplasmic; that stretch reads NAVNLTDGLD. A helical transmembrane segment spans residues 199-219; it reads GLAIMPTVFVAGGFALVAWAT. The Periplasmic portion of the chain corresponds to 220 to 235; the sequence is GNMNFASYLHIPYLRH. A helical transmembrane segment spans residues 236–256; that stretch reads AGELVIVCTAIVGAGLGFLWF. Topologically, residues 257-262 are cytoplasmic; it reads NTYPAQ. A helical transmembrane segment spans residues 263 to 283; it reads VFMGDVGSLALGGALGIIAVL. Topologically, residues 284-287 are periplasmic; that stretch reads LRQE. Residues 288–308 traverse the membrane as a helical segment; the sequence is FLLVIMGGVFVVETLSVILQV. Topologically, residues 309 to 337 are cytoplasmic; sequence GSFKLRGQRIFRMAPIHHHYELKGWPEPR. A helical membrane pass occupies residues 338 to 358; the sequence is VIVRFWIISLMLVLIGLATLK. Topologically, residues 359 to 360 are periplasmic; the sequence is VR.

Belongs to the glycosyltransferase 4 family. MraY subfamily. The cofactor is Mg(2+).

Its subcellular location is the cell inner membrane. It catalyses the reaction UDP-N-acetyl-alpha-D-muramoyl-L-alanyl-gamma-D-glutamyl-meso-2,6-diaminopimeloyl-D-alanyl-D-alanine + di-trans,octa-cis-undecaprenyl phosphate = di-trans,octa-cis-undecaprenyl diphospho-N-acetyl-alpha-D-muramoyl-L-alanyl-D-glutamyl-meso-2,6-diaminopimeloyl-D-alanyl-D-alanine + UMP. It participates in cell wall biogenesis; peptidoglycan biosynthesis. Functionally, catalyzes the initial step of the lipid cycle reactions in the biosynthesis of the cell wall peptidoglycan: transfers peptidoglycan precursor phospho-MurNAc-pentapeptide from UDP-MurNAc-pentapeptide onto the lipid carrier undecaprenyl phosphate, yielding undecaprenyl-pyrophosphoryl-MurNAc-pentapeptide, known as lipid I. The sequence is that of Phospho-N-acetylmuramoyl-pentapeptide-transferase from Escherichia coli O7:K1 (strain IAI39 / ExPEC).